We begin with the raw amino-acid sequence, 407 residues long: FMN-dependent alpha-hydroxy acid dehydrogenase PB1A11.03 (407 aa).

One can recognise an FMN hydroxy acid dehydrogenase domain in the interval 28–406 (QRPQITVDGR…DLNRDVLYKE (379 aa)). Tyr54 provides a ligand contact to a 2-oxocarboxylate. Ser136 and Gln158 together coordinate FMN. Tyr160 contributes to the a 2-oxocarboxylate binding site. Thr188 provides a ligand contact to FMN. Arg197 is an a 2-oxocarboxylate binding site. FMN is bound at residue Lys277. His301 serves as the catalytic Proton acceptor. Arg304 provides a ligand contact to a 2-oxocarboxylate. FMN-binding positions include 332–336 (DSGVR) and 355–356 (GR).

This sequence belongs to the FMN-dependent alpha-hydroxy acid dehydrogenase family. The cofactor is FMN.

It is found in the cytoplasm. The protein resides in the nucleus. In Schizosaccharomyces pombe (strain 972 / ATCC 24843) (Fission yeast), this protein is FMN-dependent alpha-hydroxy acid dehydrogenase PB1A11.03.